The sequence spans 271 residues: Signal recognition particle receptor subunit beta (271 aa).

A helical membrane pass occupies residues 37–57 (LLSVVVAVLAVLLTLVFWKLI). GTP contacts are provided by residues 71–79 (GLCDSGKTL) and 92–95 (TQTS). A Phosphoserine modification is found at Ser112. Residue Gly120 participates in GTP binding. Position 214 is a phosphothreonine (Thr214). GTP is bound at residue Ala248.

It belongs to the SRP receptor beta subunit family. As to quaternary structure, heterodimer with SRPRA.

The protein resides in the endoplasmic reticulum membrane. Functionally, component of the signal recognition particle (SRP) complex receptor (SR). Ensures, in conjunction with the SRP complex, the correct targeting of the nascent secretory proteins to the endoplasmic reticulum membrane system. May mediate the membrane association of SR. This chain is Signal recognition particle receptor subunit beta (SRPRB), found in Homo sapiens (Human).